The sequence spans 144 residues: Globin (144 aa).

N-acetylalanine is present on Ala1. The Globin domain maps to 1–144 (ALSAADAGLL…IISALQSAGK (144 aa)). A heme b-binding site is contributed by His95.

This sequence belongs to the globin family. As to quaternary structure, monomer.

The protein is Globin of Aplysia juliana (Walking sea hare).